Consider the following 2521-residue polypeptide: Partially reducing polyketide synthase tpeA (2521 aa).

The 428-residue stretch at 7–434 (DQSIAVIGLS…GSNAHAIIDN (428 aa)) folds into the Ketosynthase family 3 (KS3) domain. Residues 47-66 (RWNSRRFQDDKNHSQNTSRT) are disordered. Catalysis depends on for beta-ketoacyl synthase activity residues Cys180, His315, and His357. The 302-residue stretch at 554–855 (YVFTGQGAQW…LRGPVTQILQ (302 aa)) folds into the Malonyl-CoA:ACP transacylase (MAT) domain. The interval 948 to 1088 (SSFIGLPMPS…GLVTVEFEQL (141 aa)) is N-terminal hotdog fold. The region spanning 948-1258 (SSFIGLPMPS…CVEMPSTAGV (311 aa)) is the PKS/mFAS DH domain. A dehydratase (DH) domain region spans residues 949–1256 (SFIGLPMPSF…LTCVEMPSTA (308 aa)). The tract at residues 1100–1258 (TTVQQAEAFY…CVEMPSTAGV (159 aa)) is C-terminal hotdog fold. The Enoyl reductase (ER) domain maps to 1809 to 2121 (GMLNTLCFQA…DNRHHGKITL (313 aa)). Residues 2146–2323 (TYLIAGGLGG…AVTIDLGIVK (178 aa)) enclose the Ketoreductase (KR) domain. Positions 2433 to 2510 (DAVLFVTGAV…SFARDLVGKG (78 aa)) constitute a Carrier domain. Ser2470 is modified (O-(pantetheine 4'-phosphoryl)serine).

It depends on pantetheine 4'-phosphate as a cofactor.

The protein operates within secondary metabolite biosynthesis. Functionally, partially reducing polyketide synthase; part of the gene cluster that mediates the biosynthesis of polyesters containing 2,4-dihydroxy-6-(2-hydroxypropyl)benzoate and 3-hydroxybutyrate moieties, such as talapolyester G, 15G256beta and 15G256beta-2; as well as to oxidized derivatives such as 15G256alpha. The biosynthesis of the polyesters probably starts with the formation of the diketide 3-hydroxybutyryl-S-ACP catalyzed by the partially reducing polyketide synthase tpeA. The acceptance of 3-hydroxybutyryl by the non-reducing polyketide synthase tpeB would initiate further elongation and cyclization, catalyzed by KS and PT, respectively, to form 2,4-dihydroxy-6-(2-hydroxyn-propyl)benzoyl-S-ACP intermediate. The TE domain could catalyze lactonization at this step to yield 6-hydroxymellein as a derailment product. The polyesterification process maybe occurs when additional molecules of 3-hydroxybutyryl are transferred to tpeB. Following the first esterification step, an intramolecular cyclization catalyzed by the TE domain of tpeB would give talarodioxadione 1, whereas the ethyl esterification of talapolyester G perhaps happens spontaneously. Further oxidation by the cytochrome P450 monooxygenase tpeC then leads to the formation of oxidized derivatives. This chain is Partially reducing polyketide synthase tpeA, found in Talaromyces stipitatus (strain ATCC 10500 / CBS 375.48 / QM 6759 / NRRL 1006) (Penicillium stipitatum).